Consider the following 1379-residue polypeptide: DNA-directed RNA polymerase subunit beta'' (1379 aa).

Zn(2+) is bound by residues cysteine 220, cysteine 291, cysteine 298, and cysteine 301.

The protein belongs to the RNA polymerase beta' chain family. RpoC2 subfamily. As to quaternary structure, in plastids the minimal PEP RNA polymerase catalytic core is composed of four subunits: alpha, beta, beta', and beta''. When a (nuclear-encoded) sigma factor is associated with the core the holoenzyme is formed, which can initiate transcription. It depends on Zn(2+) as a cofactor.

Its subcellular location is the plastid. The enzyme catalyses RNA(n) + a ribonucleoside 5'-triphosphate = RNA(n+1) + diphosphate. Its function is as follows. DNA-dependent RNA polymerase catalyzes the transcription of DNA into RNA using the four ribonucleoside triphosphates as substrates. The sequence is that of DNA-directed RNA polymerase subunit beta'' from Cuscuta reflexa (Southern Asian dodder).